The following is a 447-amino-acid chain: FAD-dependent monooxygenase tropB (447 aa).

A helical transmembrane segment spans residues 12–32 (PLSVGIVGGGIIGVILAAGLV). The FAD site is built by Glu-42, Ala-55, and Arg-124. N-linked (GlcNAc...) asparagine glycosylation occurs at Asn-153. Residues Arg-206 and Tyr-239 contribute to the active site. N-linked (GlcNAc...) asparagine glycosylation is present at Asn-243. FAD contacts are provided by Asp-322 and Ala-335.

Belongs to the paxM FAD-dependent monooxygenase family. It depends on FAD as a cofactor.

The protein resides in the membrane. The protein operates within secondary metabolite biosynthesis. Functionally, FAD-dependent monooxygenase; part of the gene cluster that mediates the biosynthesis of the tropolone class of fungal maleic anhydrides. Within the pathway, tropB catalyzes a synthetically challenging asymmetric oxidative dearomatization reaction to convert 3-methylorcinaldehyde into a hydroxycyclohexadione. The pathway begins with the synthesis of 3-methylorcinaldehyde by the non-reducing polyketide synthase (PKS) tropA. 3-methylorcinaldehyde is the substrate for the FAD-dependent monooxygenase tropB to yield a dearomatized hydroxycyclohexadione. The 2-oxoglutarate-dependent dioxygenase tropC then performs the oxidative ring expansion to provide the first tropolone metabolite stipitaldehyde. Trop D converts stipitaldehyde into stipitacetal which is in turn converted to stipitalide by the short-chain dehydrogenase/reductase tropE. The next steps involve tropF, tropG, tropH, tropI and tropJ to form successive tropolone maleic anhydrides including stipitaldehydic, stipitatonic and stipitatic acids. This Talaromyces stipitatus (strain ATCC 10500 / CBS 375.48 / QM 6759 / NRRL 1006) (Penicillium stipitatum) protein is FAD-dependent monooxygenase tropB.